Consider the following 322-residue polypeptide: tRNA dimethylallyltransferase (322 aa).

Gly-19–Thr-26 lines the ATP pocket. A substrate-binding site is contributed by Thr-21–Thr-26. 3 interaction with substrate tRNA regions span residues Asp-44–Leu-47, Gln-168–Arg-172, and Arg-255–Arg-260.

Belongs to the IPP transferase family. Monomer. Requires Mg(2+) as cofactor.

The enzyme catalyses adenosine(37) in tRNA + dimethylallyl diphosphate = N(6)-dimethylallyladenosine(37) in tRNA + diphosphate. Its function is as follows. Catalyzes the transfer of a dimethylallyl group onto the adenine at position 37 in tRNAs that read codons beginning with uridine, leading to the formation of N6-(dimethylallyl)adenosine (i(6)A). In Cupriavidus necator (strain ATCC 17699 / DSM 428 / KCTC 22496 / NCIMB 10442 / H16 / Stanier 337) (Ralstonia eutropha), this protein is tRNA dimethylallyltransferase.